We begin with the raw amino-acid sequence, 354 residues long: Guanine nucleotide-binding protein G(i) subunit alpha-1 (354 aa).

Gly-2 is lipidated: N-myristoyl glycine. Cys-3 is lipidated: S-palmitoyl cysteine. Residues 32–354 form the G-alpha domain; sequence REVKLLLLGA…KNNLKDCGLF (323 aa). Residues 35-48 are G1 motif; it reads KLLLLGAGESGKST. GTP contacts are provided by residues 43 to 48, 150 to 151, and 175 to 178; these read ESGKST, DS, and LRTR. Residue Ser-47 coordinates Mg(2+). A G2 motif region spans residues 173 to 181; it reads DVLRTRVKT. Residue Thr-181 coordinates Mg(2+). The segment at 196 to 205 is G3 motif; that stretch reads FKMFDVGGQR. Residues 200–204, 269–272, and Ala-326 contribute to the GTP site; these read DVGGQ and NKKD. A G4 motif region spans residues 265–272; it reads ILFLNKKD. The G5 motif stretch occupies residues 324–329; sequence TCATDT.

It belongs to the G-alpha family. G(i/o/t/z) subfamily. As to quaternary structure, heterotrimeric G proteins are composed of 3 units; alpha, beta and gamma. The alpha chain contains the guanine nucleotide binding site. Part of a spindle orientation complex at least composed of GNAI1, GPSM2 and NUMA1. Identified in complex with the beta subunit GNB1 and the gamma subunit GNG1. Identified in complex with the beta subunit GNB1 and the gamma subunit GNG2. Component of the TAS2R14-GNAI1 complex, consisting of TAS2R14, GNAI1, GNB1 and GNG2; within the complex interacts with TAS2R14; this complex plays a role in the perception of bitterness. GTP binding causes dissociation of the heterotrimer, liberating the individual subunits so that they can interact with downstream effector proteins. Interacts (GDP-bound form) with GPSM1; this inhibits guanine nucleotide exchange and GTP binding. Interacts (GDP-bound form) with GPSM2 (via GoLoco domains); this inhibits guanine nucleotide exchange. Interacts with RGS10; this strongly enhances GTP hydrolysis. Interacts with RGS1 and RGS16. Interacts with RGS4. Interacts with RGS12. Interacts (via active GTP- or inactive GDP-bound forms) with RGS14 (via RGS and GoLoco domains). Interacts with RGS3, RGS6, RGS7, RGS8, RGS17, RGS18 and RGS20 (in vitro). Interacts (GDP-bound form) with RIC8A (via C-terminus); promoting GNAI1 folding and association with the plasma membrane. Interacts (inactive GDP-bound form) with NUCB1 (via GBA motif); the interaction leads to activation of GNAI1. Interacts (inactive GDP-bound form) with CCDC88C/DAPLE (via GBA motif); the interaction leads to activation of GNAI1. Interacts (inactive GDP-bound form) with CCDC8A/GIV (via GBA motif). Interacts with GPR15. Myristoylation at Gly-2 is required for membrane anchoring before palmitoylation. In terms of processing, palmitoylation at Cys-3 varies with membrane lipid composition.

It localises to the nucleus. The protein resides in the cytoplasm. The protein localises to the cell membrane. It is found in the cytoskeleton. Its subcellular location is the microtubule organizing center. It localises to the centrosome. The protein resides in the cell cortex. The protein localises to the membrane. The enzyme catalyses GTP + H2O = GDP + phosphate + H(+). Its function is as follows. Guanine nucleotide-binding proteins (G proteins) function as transducers downstream of G protein-coupled receptors (GPCRs) in numerous signaling cascades. The alpha chain contains the guanine nucleotide binding site and alternates between an active, GTP-bound state and an inactive, GDP-bound state. Signaling by an activated GPCR promotes GDP release and GTP binding. The alpha subunit has a low GTPase activity that converts bound GTP to GDP, thereby terminating the signal. Both GDP release and GTP hydrolysis are modulated by numerous regulatory proteins. Signaling is mediated via effector proteins, such as adenylate cyclase. Inhibits adenylate cyclase activity of ADCY1, ADCY5 and ADCY6, leading to decreased intracellular cAMP levels. The inactive GDP-bound form prevents the association of RGS14 with centrosomes and is required for the translocation of RGS14 from the cytoplasm to the plasma membrane. Required for normal cytokinesis during mitosis. Required for cortical dynein-dynactin complex recruitment during metaphase. In Rattus norvegicus (Rat), this protein is Guanine nucleotide-binding protein G(i) subunit alpha-1 (Gnai1).